Reading from the N-terminus, the 139-residue chain is Large ribosomal subunit protein uL16 (139 aa).

Positions 1-16 (MLIPKRTKYRKQHRPV) are enriched in basic residues. The segment at 1–22 (MLIPKRTKYRKQHRPVRSGMSK) is disordered.

Belongs to the universal ribosomal protein uL16 family. As to quaternary structure, part of the 50S ribosomal subunit.

Its function is as follows. Binds 23S rRNA and is also seen to make contacts with the A and possibly P site tRNAs. This is Large ribosomal subunit protein uL16 from Bifidobacterium longum subsp. infantis (strain ATCC 15697 / DSM 20088 / JCM 1222 / NCTC 11817 / S12).